A 711-amino-acid polypeptide reads, in one-letter code: BCLAF1 and THRAP3 family member 3 (711 aa).

Residues 1 to 15 (MARSRSRSPRWKHRS) show a composition bias toward basic residues. Disordered stretches follow at residues 1–42 (MARS…YRKD) and 48–67 (AWRMDSEKHGQSKPRIPSRG). Residues Ser-15 and Ser-17 each carry the phosphoserine modification. Basic and acidic residues predominate over residues 48–57 (AWRMDSEKHG). Residues Ser-78, Ser-80, and Ser-187 each carry the phosphoserine modification. 2 disordered regions span residues 94–350 (KPHR…KDSI) and 371–404 (EKIKKEGDCRKESNSSSNQLDKSQKLPDVKPSPI). Basic and acidic residues-rich tracts occupy residues 163–197 (FRFEGKWHEDELRHQRIQEEKYSQSTRRGSEDFET), 204–213 (RYPEDRDFRK), 220–242 (RPKDVERYESREPARNPKWKPEH), 296–311 (SDGRTQKYCKEEDRKY), 318–349 (LNRELDCFNTGRGRETQDGQVKEPFKPSKKDS), and 371–383 (EKIKKEGDCRKES). Lys-400 is covalently cross-linked (Glycyl lysine isopeptide (Lys-Gly) (interchain with G-Cter in SUMO2)). A phosphoserine mark is found at Ser-402 and Ser-578.

Belongs to the BCLAF1/THRAP3 family.

The protein resides in the mitochondrion. This Homo sapiens (Human) protein is BCLAF1 and THRAP3 family member 3.